Consider the following 520-residue polypeptide: Cytochrome P450 monooxygenase vrtE (520 aa).

A helical transmembrane segment spans residues 16 to 36; that stretch reads ALSLLHYVLGAIFLLLLFHML. Asparagine 137 carries an N-linked (GlcNAc...) asparagine glycan. Cysteine 459 contributes to the heme binding site.

It belongs to the cytochrome P450 family. Heme serves as cofactor.

The protein localises to the membrane. Its pathway is secondary metabolite biosynthesis; terpenoid biosynthesis. Functionally, cytochrome P450 monooxygenase; part of the gene cluster that mediates the biosynthesis of viridicatumtoxin, a tetracycline-like fungal meroterpenoid with a unique, fused spirobicyclic ring system. The first step of the pathway is the production of the malonamoyl-CoA starter unit for the polyketide synthase vrtA. The aldolase vrtJ may be involved in the synthesis of the malonamate substrate for malonamoyl-CoA synthetase vrtB. The polyketide synthase vrtA then may utilize the malonamoyl-CoA starter unit, followed by sequential condensation of eight malonyl-CoA units to form the polyketide backbone. The cyclization of the last ring could be mediated by the lactamase-like protein vrtG. The proposed post-PKS tailoring steps are a hydroxylation at C5 catalyzed the cytochrome P450 monooxygenase vrtE, a hydroxylation at C12a catalyzed by VrtH and/or VrtI, and an O-methylation by the O-methyltransferase vrtF. VrtC is then proposed to catalyze the transfer of a geranyl group synthesized by vrtD to the aromatic C ring of the tetracyclic polyketide intermediate of viridicatumtoxin to yield previridicatumtoxin. Finally, the cytochrome P450 monooxygenase vrtK catalyzes the spirocyclization of the geranyl moiety of previridicatumtoxin to afford viridicatumtoxin. This Penicillium aethiopicum protein is Cytochrome P450 monooxygenase vrtE.